A 115-amino-acid polypeptide reads, in one-letter code: Large ribosomal subunit protein bL19 (115 aa).

It belongs to the bacterial ribosomal protein bL19 family.

This protein is located at the 30S-50S ribosomal subunit interface and may play a role in the structure and function of the aminoacyl-tRNA binding site. The chain is Large ribosomal subunit protein bL19 from Francisella philomiragia subsp. philomiragia (strain ATCC 25017 / CCUG 19701 / FSC 153 / O#319-036).